The following is a 343-amino-acid chain: N-acetyl-gamma-glutamyl-phosphate reductase (343 aa).

Cys-147 is an active-site residue.

The protein belongs to the NAGSA dehydrogenase family. Type 1 subfamily.

The protein resides in the cytoplasm. The enzyme catalyses N-acetyl-L-glutamate 5-semialdehyde + phosphate + NADP(+) = N-acetyl-L-glutamyl 5-phosphate + NADPH + H(+). It participates in amino-acid biosynthesis; L-arginine biosynthesis; N(2)-acetyl-L-ornithine from L-glutamate: step 3/4. Functionally, catalyzes the NADPH-dependent reduction of N-acetyl-5-glutamyl phosphate to yield N-acetyl-L-glutamate 5-semialdehyde. The polypeptide is N-acetyl-gamma-glutamyl-phosphate reductase (Staphylococcus aureus (strain MRSA252)).